A 518-amino-acid polypeptide reads, in one-letter code: ATP synthase subunit alpha (518 aa).

Residue 170 to 177 (GDRQTGKT) participates in ATP binding.

The protein belongs to the ATPase alpha/beta chains family. In terms of assembly, F-type ATPases have 2 components, CF(1) - the catalytic core - and CF(0) - the membrane proton channel. CF(1) has five subunits: alpha(3), beta(3), gamma(1), delta(1), epsilon(1). CF(0) has three main subunits: a(1), b(2) and c(9-12). The alpha and beta chains form an alternating ring which encloses part of the gamma chain. CF(1) is attached to CF(0) by a central stalk formed by the gamma and epsilon chains, while a peripheral stalk is formed by the delta and b chains.

The protein localises to the cell membrane. The enzyme catalyses ATP + H2O + 4 H(+)(in) = ADP + phosphate + 5 H(+)(out). Produces ATP from ADP in the presence of a proton gradient across the membrane. The alpha chain is a regulatory subunit. In Mycoplasmoides gallisepticum (strain R(low / passage 15 / clone 2)) (Mycoplasma gallisepticum), this protein is ATP synthase subunit alpha.